Here is a 152-residue protein sequence, read N- to C-terminus: Transcriptional regulator MraZ (152 aa).

SpoVT-AbrB domains follow at residues 5–52 (ASAI…PLDE) and 81–124 (AHEC…DETA).

It belongs to the MraZ family. In terms of assembly, forms oligomers.

It is found in the cytoplasm. It localises to the nucleoid. The protein is Transcriptional regulator MraZ of Shewanella woodyi (strain ATCC 51908 / MS32).